We begin with the raw amino-acid sequence, 366 residues long: tRNA/tmRNA (uracil-C(5))-methyltransferase (366 aa).

S-adenosyl-L-methionine contacts are provided by Gln190, Tyr218, Asn223, Glu239, and Asp299. Cys324 acts as the Nucleophile in catalysis. Residue Glu358 is the Proton acceptor of the active site.

It belongs to the class I-like SAM-binding methyltransferase superfamily. RNA M5U methyltransferase family. TrmA subfamily.

It catalyses the reaction uridine(54) in tRNA + S-adenosyl-L-methionine = 5-methyluridine(54) in tRNA + S-adenosyl-L-homocysteine + H(+). The enzyme catalyses uridine(341) in tmRNA + S-adenosyl-L-methionine = 5-methyluridine(341) in tmRNA + S-adenosyl-L-homocysteine + H(+). Functionally, dual-specificity methyltransferase that catalyzes the formation of 5-methyluridine at position 54 (m5U54) in all tRNAs, and that of position 341 (m5U341) in tmRNA (transfer-mRNA). In Salmonella arizonae (strain ATCC BAA-731 / CDC346-86 / RSK2980), this protein is tRNA/tmRNA (uracil-C(5))-methyltransferase.